Here is a 249-residue protein sequence, read N- to C-terminus: MSRTLPHLLSPDPASPFPPAERALREPDGLLAIGGDLHPQRLLNAYAHGIFPWFSDGQPLLWWSPNPRTVFRTDAIHLSSRFRRQLRTCTWTLRADTAFAQVIAACASSPRPGQDGTWITDQMQEAYLDLHRRGYAHSVEVFDGARLVGGIYGVAIGQMFFGESMFSGASGGSKIALAALAAKLHGLGWPLIDAQVENAHLMRLGAQRLPREQFLQHVATQVALPEPPGSWTQRYGERHASGLAGVRLT.

The tract at residues 1–21 (MSRTLPHLLSPDPASPFPPAE) is disordered.

The protein belongs to the L/F-transferase family.

The protein localises to the cytoplasm. The enzyme catalyses N-terminal L-lysyl-[protein] + L-leucyl-tRNA(Leu) = N-terminal L-leucyl-L-lysyl-[protein] + tRNA(Leu) + H(+). It carries out the reaction N-terminal L-arginyl-[protein] + L-leucyl-tRNA(Leu) = N-terminal L-leucyl-L-arginyl-[protein] + tRNA(Leu) + H(+). It catalyses the reaction L-phenylalanyl-tRNA(Phe) + an N-terminal L-alpha-aminoacyl-[protein] = an N-terminal L-phenylalanyl-L-alpha-aminoacyl-[protein] + tRNA(Phe). Its function is as follows. Functions in the N-end rule pathway of protein degradation where it conjugates Leu, Phe and, less efficiently, Met from aminoacyl-tRNAs to the N-termini of proteins containing an N-terminal arginine or lysine. In Xanthomonas campestris pv. campestris (strain B100), this protein is Leucyl/phenylalanyl-tRNA--protein transferase.